The following is a 413-amino-acid chain: Serine/threonine transporter SstT (413 aa).

The next 9 helical transmembrane spans lie at 15 to 35 (NIVI…TLAP), 48 to 68 (FVSA…AASI), 82 to 102 (VIVL…VMSF), 141 to 161 (ALMT…GLGL), 178 to 198 (CISA…FGLV), 216 to 236 (LLAV…PLIV), 290 to 310 (IPLG…VLTL), 330 to 350 (LVAA…LLLI), and 357 to 377 (FGIS…IGVV).

This sequence belongs to the dicarboxylate/amino acid:cation symporter (DAACS) (TC 2.A.23) family.

It is found in the cell inner membrane. It catalyses the reaction L-serine(in) + Na(+)(in) = L-serine(out) + Na(+)(out). The enzyme catalyses L-threonine(in) + Na(+)(in) = L-threonine(out) + Na(+)(out). Involved in the import of serine and threonine into the cell, with the concomitant import of sodium (symport system). The protein is Serine/threonine transporter SstT of Aliivibrio fischeri (strain ATCC 700601 / ES114) (Vibrio fischeri).